Consider the following 648-residue polypeptide: Biosynthetic arginine decarboxylase (648 aa).

N6-(pyridoxal phosphate)lysine is present on Lys-109. Leu-291–Tyr-301 contacts substrate.

Belongs to the Orn/Lys/Arg decarboxylase class-II family. SpeA subfamily. It depends on Mg(2+) as a cofactor. The cofactor is pyridoxal 5'-phosphate.

It catalyses the reaction L-arginine + H(+) = agmatine + CO2. It functions in the pathway amine and polyamine biosynthesis; agmatine biosynthesis; agmatine from L-arginine: step 1/1. Its function is as follows. Catalyzes the biosynthesis of agmatine from arginine. The chain is Biosynthetic arginine decarboxylase from Prochlorococcus marinus (strain MIT 9303).